The following is a 152-amino-acid chain: Mitochondrial fission 1 protein (152 aa).

Position 1 is an N-acetylmethionine (methionine 1). Over 1 to 122 (MEAVLNELVS…LIDKAMKKDG (122 aa)) the chain is Cytoplasmic. Serine 10 is modified (phosphoserine). A TPR repeat occupies 71–104 (RDYVFYLAVGNYRLKEYEKALKYVRGLLQTEPQN). The helical transmembrane segment at 123-143 (LVGMAIVGGMALGVAGLAGLI) threads the bilayer. Residues 144 to 152 (GLAVSKSKS) are Mitochondrial intermembrane-facing.

It belongs to the FIS1 family. In terms of assembly, interacts with DNM1L/DLP1 through the TPR region; may form part of a larger protein complex at the endoplasmic reticulum-mitochondrial interface during mitochondrial fission. Interacts with MARCHF5. Interacts with MIEF1. Interacts with PEX11A, PEX11B and PEX11G. Post-translationally, ubiquitinated by MARCHF5.

It is found in the mitochondrion outer membrane. The protein resides in the peroxisome membrane. Functionally, involved in the fragmentation of the mitochondrial network and its perinuclear clustering. Plays a minor role in the recruitment and association of the fission mediator dynamin-related protein 1 (DNM1L) to the mitochondrial surface and mitochondrial fission. May not be essential for the assembly of functional fission complexes and the subsequent membrane scission event. Also mediates peroxisomal fission. May act when the products of fission are directed toward mitochondrial homeostasis, mitophagy, or apoptosis. Can induce cytochrome c release from the mitochondrion to the cytosol, ultimately leading to apoptosis. The polypeptide is Mitochondrial fission 1 protein (Rattus norvegicus (Rat)).